Reading from the N-terminus, the 463-residue chain is Retinoic acid receptor RXR-gamma (463 aa).

The interval 1-138 (MYGNYSHFMK…TSPGSLVKHI (138 aa)) is modulating. Positions 18–53 (SPGHTGSTSMSPSAALSTGKPMDSHPSYTDTPVSAP) are disordered. A compositionally biased stretch (polar residues) spans 21–33 (HTGSTSMSPSAAL). 2 NR C4-type zinc fingers span residues 139–159 (CAICGDRSSGKHYGVYSCEGC) and 175–194 (CRDNKDCLIDKRQRNRCQYC). The nuclear receptor DNA-binding region spans 139-204 (CAICGDRSSG…RYQKCLVMGM (66 aa)). Residues 205-230 (KREAVQEERQRSRERAESEAECASSG) are hinge. Basic and acidic residues predominate over residues 211–222 (EERQRSRERAES). The segment at 211–232 (EERQRSRERAESEAECASSGHE) is disordered. Residues 231–459 (HEDMPVERIL…TFLMEMLETP (229 aa)) form the NR LBD domain.

It belongs to the nuclear hormone receptor family. NR2 subfamily. Homodimer. Heterodimer with a RAR molecule. Binds DNA preferentially as a RAR/RXR heterodimer. Interacts with RARA. In terms of processing, acetylated by EP300.

Its subcellular location is the nucleus. It is found in the cytoplasm. In terms of biological role, receptor for retinoic acid. Retinoic acid receptors bind as heterodimers to their target response elements in response to their ligands, all-trans or 9-cis retinoic acid, and regulate gene expression in various biological processes. The RAR/RXR heterodimers bind to the retinoic acid response elements (RARE) composed of tandem 5'-AGGTCA-3' sites known as DR1-DR5. The high affinity ligand for RXRs is 9-cis retinoic acid. The protein is Retinoic acid receptor RXR-gamma (RXRG) of Pongo abelii (Sumatran orangutan).